Reading from the N-terminus, the 314-residue chain is Putative S-adenosyl-L-methionine-dependent methyltransferase MAV_0301 (314 aa).

Residues Asp-132 and Asp-161–Leu-162 each bind S-adenosyl-L-methionine.

It belongs to the UPF0677 family.

Exhibits S-adenosyl-L-methionine-dependent methyltransferase activity. The protein is Putative S-adenosyl-L-methionine-dependent methyltransferase MAV_0301 of Mycobacterium avium (strain 104).